Here is a 227-residue protein sequence, read N- to C-terminus: Leucyl/phenylalanyl-tRNA--protein transferase (227 aa).

This sequence belongs to the L/F-transferase family.

Its subcellular location is the cytoplasm. It catalyses the reaction N-terminal L-lysyl-[protein] + L-leucyl-tRNA(Leu) = N-terminal L-leucyl-L-lysyl-[protein] + tRNA(Leu) + H(+). It carries out the reaction N-terminal L-arginyl-[protein] + L-leucyl-tRNA(Leu) = N-terminal L-leucyl-L-arginyl-[protein] + tRNA(Leu) + H(+). The enzyme catalyses L-phenylalanyl-tRNA(Phe) + an N-terminal L-alpha-aminoacyl-[protein] = an N-terminal L-phenylalanyl-L-alpha-aminoacyl-[protein] + tRNA(Phe). Functions in the N-end rule pathway of protein degradation where it conjugates Leu, Phe and, less efficiently, Met from aminoacyl-tRNAs to the N-termini of proteins containing an N-terminal arginine or lysine. The protein is Leucyl/phenylalanyl-tRNA--protein transferase of Afipia carboxidovorans (strain ATCC 49405 / DSM 1227 / KCTC 32145 / OM5) (Oligotropha carboxidovorans).